A 607-amino-acid polypeptide reads, in one-letter code: Elongation factor 4 (607 aa).

In terms of domain architecture, tr-type G spans 11 to 193 (SKIRNFSIIA…QIVEKVPAPT (183 aa)). GTP is bound by residues 23-28 (DHGKST) and 140-143 (NKID).

Belongs to the TRAFAC class translation factor GTPase superfamily. Classic translation factor GTPase family. LepA subfamily.

The protein localises to the cell membrane. It catalyses the reaction GTP + H2O = GDP + phosphate + H(+). In terms of biological role, required for accurate and efficient protein synthesis under certain stress conditions. May act as a fidelity factor of the translation reaction, by catalyzing a one-codon backward translocation of tRNAs on improperly translocated ribosomes. Back-translocation proceeds from a post-translocation (POST) complex to a pre-translocation (PRE) complex, thus giving elongation factor G a second chance to translocate the tRNAs correctly. Binds to ribosomes in a GTP-dependent manner. The polypeptide is Elongation factor 4 (Bacillus cereus (strain Q1)).